The following is a 158-amino-acid chain: C-type lectin BiL (158 aa).

An N-terminal signal peptide occupies residues 1-23; that stretch reads MGRFIFVSFGLLVVFLSLSGAKG. Disulfide bonds link Cys26–Cys37, Cys54–Cys154, Cys61–Cys156, and Cys129–Cys146. The region spanning 33-155 is the C-type lectin domain; it reads MNGLCYKIFD…CESKNAFLCQ (123 aa). Ca(2+) contacts are provided by Gln119, Asp121, Glu127, Asn142, and Asp143. The Galactose-binding motif lies at 119 to 121; that stretch reads QPD.

In terms of assembly, homodimer; disulfide-linked. As to expression, expressed by the venom gland.

It is found in the secreted. In terms of biological role, lectin with a hemagglutinating activity that is inhibited by galactose, lactose and EDTA. Is calcium-dependent. Shows effects on the renal function of isolated perfused rat kidneys by increasing both perfusion pressure (PP) and renal vascular resistance (RVR). In addition, the urinary flow and glomerular filtration rate (GFR) decreases significantly. The changes observed may reflect direct injury to the glomerular and tubular renal cells, and the rise in permeability in the glomerular endothelial cells, may be the effect of interactions of C-type lectin with endothelial cells or due to release of other mediators by mesangial, tubular and endothelial cells. The chain is C-type lectin BiL from Bothrops insularis (Golden lancehead).